The sequence spans 293 residues: Formamidopyrimidine-DNA glycosylase (293 aa).

The active-site Schiff-base intermediate with DNA is proline 2. Glutamate 3 acts as the Proton donor in catalysis. Lysine 60 serves as the catalytic Proton donor; for beta-elimination activity. DNA is bound by residues histidine 110, arginine 129, and arginine 174. The segment at 259-293 (NVYRRTGKECRKCGNLIERKKISGRSTHWCPKCQK) adopts an FPG-type zinc-finger fold. Arginine 283 acts as the Proton donor; for delta-elimination activity in catalysis.

The protein belongs to the FPG family. In terms of assembly, monomer. The cofactor is Zn(2+).

The enzyme catalyses Hydrolysis of DNA containing ring-opened 7-methylguanine residues, releasing 2,6-diamino-4-hydroxy-5-(N-methyl)formamidopyrimidine.. The catalysed reaction is 2'-deoxyribonucleotide-(2'-deoxyribose 5'-phosphate)-2'-deoxyribonucleotide-DNA = a 3'-end 2'-deoxyribonucleotide-(2,3-dehydro-2,3-deoxyribose 5'-phosphate)-DNA + a 5'-end 5'-phospho-2'-deoxyribonucleoside-DNA + H(+). In terms of biological role, involved in base excision repair of DNA damaged by oxidation or by mutagenic agents. Acts as a DNA glycosylase that recognizes and removes damaged bases. Has a preference for oxidized purines, such as 7,8-dihydro-8-oxoguanine (8-oxoG). Has AP (apurinic/apyrimidinic) lyase activity and introduces nicks in the DNA strand. Cleaves the DNA backbone by beta-delta elimination to generate a single-strand break at the site of the removed base with both 3'- and 5'-phosphates. This Prochlorococcus marinus (strain MIT 9215) protein is Formamidopyrimidine-DNA glycosylase.